We begin with the raw amino-acid sequence, 93 residues long: Small ribosomal subunit protein bS18 (93 aa).

Residues M1 to G11 show a composition bias toward basic residues. The segment at M1–K27 is disordered.

Belongs to the bacterial ribosomal protein bS18 family. In terms of assembly, part of the 30S ribosomal subunit. Forms a tight heterodimer with protein bS6.

Binds as a heterodimer with protein bS6 to the central domain of the 16S rRNA, where it helps stabilize the platform of the 30S subunit. The sequence is that of Small ribosomal subunit protein bS18 from Salinispora tropica (strain ATCC BAA-916 / DSM 44818 / JCM 13857 / NBRC 105044 / CNB-440).